Reading from the N-terminus, the 247-residue chain is Uridylate kinase (247 aa).

Position 15 to 18 (15 to 18 (KLSG)) interacts with ATP. The involved in allosteric activation by GTP stretch occupies residues 23–28 (GEEGFG). Residue glycine 57 participates in UMP binding. ATP is bound by residues glycine 58 and arginine 62. UMP is bound by residues aspartate 77 and 138–145 (TGNPFFTT). ATP contacts are provided by threonine 165, tyrosine 171, and aspartate 174.

It belongs to the UMP kinase family. As to quaternary structure, homohexamer.

The protein resides in the cytoplasm. The enzyme catalyses UMP + ATP = UDP + ADP. Its pathway is pyrimidine metabolism; CTP biosynthesis via de novo pathway; UDP from UMP (UMPK route): step 1/1. Its activity is regulated as follows. Allosterically activated by GTP. Inhibited by UTP. Its function is as follows. Catalyzes the reversible phosphorylation of UMP to UDP. The sequence is that of Uridylate kinase from Pseudoalteromonas atlantica (strain T6c / ATCC BAA-1087).